The following is a 300-amino-acid chain: 17-beta-hydroxysteroid dehydrogenase 13 (300 aa).

The first 19 residues, 1–19, serve as a signal peptide directing secretion; the sequence is MNLILELLLLVGIIIYSYL. A Phosphoserine modification is found at Ser-33. 40 to 67 lines the NAD(+) pocket; that stretch reads LITGAGHGIGRLTAYEFAKQKSRLVLWD. Position 69 is a phosphoserine (Ser-69). Lys-79 is modified (N6-acetyllysine). A substrate-binding site is contributed by Ser-172. Catalysis depends on Tyr-185, which acts as the Proton acceptor. Lys-189 serves as a coordination point for NAD(+).

Belongs to the short-chain dehydrogenases/reductases (SDR) family.

The protein localises to the lipid droplet. The protein resides in the endoplasmic reticulum. The enzyme catalyses 17beta-estradiol + NAD(+) = estrone + NADH + H(+). The catalysed reaction is all-trans-retinol + NAD(+) = all-trans-retinal + NADH + H(+). It catalyses the reaction all-trans-retinal + NAD(+) + H2O = all-trans-retinoate + NADH + 2 H(+). In terms of biological role, plays a pivotal role in hepatic lipid metabolism. In vitro, it catalyzes the oxidation of a variety of lipid substrates, including 17beta-estradiol, retinol, retinal, and leukotriene B4. The chain is 17-beta-hydroxysteroid dehydrogenase 13 (Hsd17b13) from Rattus norvegicus (Rat).